A 203-amino-acid polypeptide reads, in one-letter code: Large ribosomal subunit protein uL13 (203 aa).

An N-acetylalanine modification is found at Ala2. A Citrulline modification is found at Arg59. Residue Ser77 is modified to Phosphoserine; by ZIPK/DAPK3. The residue at position 140 (Arg140) is a Citrulline. Lys191 carries the N6-acetyllysine modification.

The protein belongs to the universal ribosomal protein uL13 family. Component of the 60S ribosome. Component of the GAIT complex. Interacts with EIF4G1. Phosphorylation at Ser-77 upon interferon-gamma treatment in monocytes involves a DAPK1-DAPK3 kinase cascade and is causing release from the ribosome, association with the GAIT complex and subsequent involvement in transcript-selective translation inhibition. Post-translationally, citrullinated by PADI4.

The protein resides in the cytoplasm. Functionally, associated with ribosomes but is not required for canonical ribosome function and has extra-ribosomal functions. Component of the GAIT (gamma interferon-activated inhibitor of translation) complex which mediates interferon-gamma-induced transcript-selective translation inhibition in inflammation processes. Upon interferon-gamma activation and subsequent phosphorylation dissociates from the ribosome and assembles into the GAIT complex which binds to stem loop-containing GAIT elements in the 3'-UTR of diverse inflammatory mRNAs (such as ceruplasmin) and suppresses their translation. In the GAIT complex interacts with m7G cap-bound eIF4G at or near the eIF3-binding site and blocks the recruitment of the 43S ribosomal complex. Involved in methylation of rRNA. This chain is Large ribosomal subunit protein uL13 (RPL13A), found in Homo sapiens (Human).